The sequence spans 397 residues: MLTCIACSKQLAGGAPPLREQSDDADDAAVARGAGECATPSTRQAIKALTAQIKDMALKASGAYRHCKPCAGSSSSSPAAGARRHHPYHAYADSGSDRFHYAYRRAGSGGDATPSVSARTDFLAGDEEEEEEEEEEEGTTADGSEDDEAKEWVAQVEPGVLITFLSLPEGGNDLKRIRFSREIFNKWQAQRWWAENYEKVMELYNVQRFNQQTPLPTTPKSEDESLKEDIPATPPLNSERLPHTLHRSLTGGRTTGYGQPDSLGHQHNLGNGHRQQHHHCYTGHQCYGSVGLASTPKLSSISGAKTETSSMDASMRSSSSPEEVDRSRELSVSVSNASDQEREWVEEDEPGVYITIRALPGGIRELRRVRFSREKFSEMHARLWWEENRARIHDQYL.

2 disordered regions span residues 14-37 (GAPP…AGEC) and 105-148 (RAGS…EDDE). Residues 124 to 148 (AGDEEEEEEEEEEEGTTADGSEDDE) show a composition bias toward acidic residues. The region spanning 150–205 (KEWVAQVEPGVLITFLSLPEGGNDLKRIRFSREIFNKWQAQRWWAENYEKVMELYN) is the BRX 1 domain. Disordered stretches follow at residues 212-278 (QTPL…QQHH) and 300-342 (SISG…DQER). Over residues 220 to 230 (KSEDESLKEDI) the composition is skewed to basic and acidic residues. A compositionally biased stretch (low complexity) spans 309-320 (SSMDASMRSSSS). A BRX 2 domain is found at 342-397 (REWVEEDEPGVYITIRALPGGIRELRRVRFSREKFSEMHARLWWEENRARIHDQYL).

This sequence belongs to the BRX family.

The protein resides in the nucleus. The chain is Protein Brevis radix-like 1 (BRXL1) from Oryza sativa subsp. japonica (Rice).